The chain runs to 279 residues: Thymidylate synthase (279 aa).

133-134 (RR) contacts dUMP. Cys-154 acts as the Nucleophile in catalysis. DUMP-binding positions include 178-181 (RSND), Asn-189, and 219-221 (HIY). Asp-181 is a binding site for (6R)-5,10-methylene-5,6,7,8-tetrahydrofolate. Ala-278 provides a ligand contact to (6R)-5,10-methylene-5,6,7,8-tetrahydrofolate.

It belongs to the thymidylate synthase family. Bacterial-type ThyA subfamily. As to quaternary structure, homodimer.

The protein resides in the cytoplasm. The catalysed reaction is dUMP + (6R)-5,10-methylene-5,6,7,8-tetrahydrofolate = 7,8-dihydrofolate + dTMP. The protein operates within pyrimidine metabolism; dTTP biosynthesis. Its function is as follows. Catalyzes the reductive methylation of 2'-deoxyuridine-5'-monophosphate (dUMP) to 2'-deoxythymidine-5'-monophosphate (dTMP) while utilizing 5,10-methylenetetrahydrofolate (mTHF) as the methyl donor and reductant in the reaction, yielding dihydrofolate (DHF) as a by-product. This enzymatic reaction provides an intracellular de novo source of dTMP, an essential precursor for DNA biosynthesis. The polypeptide is Thymidylate synthase (Streptococcus agalactiae serotype Ia (strain ATCC 27591 / A909 / CDC SS700)).